The following is a 162-amino-acid chain: NADH-quinone oxidoreductase subunit I (162 aa).

2 consecutive 4Fe-4S ferredoxin-type domains span residues 52–82 and 93–122; these read LRRY…IEAG and VRYD…EGPN. Cysteine 62, cysteine 65, cysteine 68, cysteine 72, cysteine 102, cysteine 105, cysteine 108, and cysteine 112 together coordinate [4Fe-4S] cluster.

It belongs to the complex I 23 kDa subunit family. NDH-1 is composed of 14 different subunits. Subunits NuoA, H, J, K, L, M, N constitute the membrane sector of the complex. The cofactor is [4Fe-4S] cluster.

The protein localises to the cell inner membrane. The enzyme catalyses a quinone + NADH + 5 H(+)(in) = a quinol + NAD(+) + 4 H(+)(out). NDH-1 shuttles electrons from NADH, via FMN and iron-sulfur (Fe-S) centers, to quinones in the respiratory chain. The immediate electron acceptor for the enzyme in this species is believed to be ubiquinone. Couples the redox reaction to proton translocation (for every two electrons transferred, four hydrogen ions are translocated across the cytoplasmic membrane), and thus conserves the redox energy in a proton gradient. This is NADH-quinone oxidoreductase subunit I from Afipia carboxidovorans (strain ATCC 49405 / DSM 1227 / KCTC 32145 / OM5) (Oligotropha carboxidovorans).